The following is a 299-amino-acid chain: ATP phosphoribosyltransferase (299 aa).

The protein belongs to the ATP phosphoribosyltransferase family. Long subfamily. Requires Mg(2+) as cofactor.

The protein resides in the cytoplasm. It carries out the reaction 1-(5-phospho-beta-D-ribosyl)-ATP + diphosphate = 5-phospho-alpha-D-ribose 1-diphosphate + ATP. It participates in amino-acid biosynthesis; L-histidine biosynthesis; L-histidine from 5-phospho-alpha-D-ribose 1-diphosphate: step 1/9. With respect to regulation, feedback inhibited by histidine. In terms of biological role, catalyzes the condensation of ATP and 5-phosphoribose 1-diphosphate to form N'-(5'-phosphoribosyl)-ATP (PR-ATP). Has a crucial role in the pathway because the rate of histidine biosynthesis seems to be controlled primarily by regulation of HisG enzymatic activity. This chain is ATP phosphoribosyltransferase, found in Shewanella woodyi (strain ATCC 51908 / MS32).